A 270-amino-acid polypeptide reads, in one-letter code: tRNA pseudouridine synthase A (270 aa).

Catalysis depends on D60, which acts as the Nucleophile. An RNA binding region spans residues 107–111 (FHARF). Residue Y118 participates in substrate binding. Residues 168 to 172 (QCQSR) form an interaction with tRNA region.

This sequence belongs to the tRNA pseudouridine synthase TruA family. In terms of assembly, homodimer.

The catalysed reaction is uridine(38/39/40) in tRNA = pseudouridine(38/39/40) in tRNA. Formation of pseudouridine at positions 38, 39 and 40 in the anticodon stem and loop of transfer RNAs. The protein is tRNA pseudouridine synthase A of Escherichia coli O9:H4 (strain HS).